Reading from the N-terminus, the 36-residue chain is Lambda-hexatoxin-Hv1a (36 aa).

4 cysteine pairs are disulfide-bonded: cysteine 3–cysteine 17, cysteine 10–cysteine 22, cysteine 13–cysteine 14, and cysteine 16–cysteine 33.

This sequence belongs to the neurotoxin 11 (kappa toxin) family. In terms of tissue distribution, expressed by the venom gland.

It localises to the secreted. Its function is as follows. This excitatory toxin inhibits insect calcium-activated potassium (KCa) channels (Slo-type). This Hadronyche versuta (Blue mountains funnel-web spider) protein is Lambda-hexatoxin-Hv1a.